Consider the following 203-residue polypeptide: Peroxiredoxin (203 aa).

The 154-residue stretch at 3–156 folds into the Thioredoxin domain; sequence VVLGQKAPDF…IIRVIKALQF (154 aa). Catalysis depends on Cys-44, which acts as the Cysteine sulfenic acid (-SOH) intermediate. Arg-119 contributes to the substrate binding site.

This sequence belongs to the peroxiredoxin family. Prx6 subfamily. Homodecamer. Pentamer of dimers that assemble into a ring structure.

The protein localises to the cytoplasm. It catalyses the reaction a hydroperoxide + [thioredoxin]-dithiol = an alcohol + [thioredoxin]-disulfide + H2O. In terms of biological role, thiol-specific peroxidase that catalyzes the reduction of hydrogen peroxide and organic hydroperoxides to water and alcohols, respectively. Plays a role in cell protection against oxidative stress by detoxifying peroxides. The sequence is that of Peroxiredoxin from Thermoplasma volcanium (strain ATCC 51530 / DSM 4299 / JCM 9571 / NBRC 15438 / GSS1).